A 263-amino-acid polypeptide reads, in one-letter code: Small ribosomal subunit protein eS4 (263 aa).

Positions 42–104 constitute an S4 RNA-binding domain; the sequence is LPLIVFLRNR…TGEHFRLVYD (63 aa).

Belongs to the eukaryotic ribosomal protein eS4 family.

The polypeptide is Small ribosomal subunit protein eS4 (RPS4Y1) (Pongo pygmaeus (Bornean orangutan)).